The chain runs to 240 residues: Uridylate kinase (240 aa).

ATP is bound at residue 14–17 (KLSG). G56 provides a ligand contact to UMP. The ATP site is built by G57 and R61. UMP-binding positions include D76 and 137-144 (TGNPFFTT). 3 residues coordinate ATP: T164, Y170, and D173.

The protein belongs to the UMP kinase family. As to quaternary structure, homohexamer.

Its subcellular location is the cytoplasm. It carries out the reaction UMP + ATP = UDP + ADP. It participates in pyrimidine metabolism; CTP biosynthesis via de novo pathway; UDP from UMP (UMPK route): step 1/1. Its activity is regulated as follows. Inhibited by UTP. Catalyzes the reversible phosphorylation of UMP to UDP. This chain is Uridylate kinase, found in Verminephrobacter eiseniae (strain EF01-2).